Consider the following 635-residue polypeptide: Voltage-gated potassium channel KCNC4 (635 aa).

A disordered region spans residues 1–24 (MISSVCVSSYRGRKSGNKPPSKTC). The segment at 1–28 (MISSVCVSSYRGRKSGNKPPSKTCLKEE) is inactivation gate. Residues 1–226 (MISSVCVSSY…EDPYSSRAAR (226 aa)) lie on the Cytoplasmic side of the membrane. A phosphoserine mark is found at Ser8, Ser9, Ser15, and Ser21. The Zn(2+) site is built by His116, Cys122, Cys143, and Cys144. Residues 160–180 (IFESPDGGGSGAGPSDEAGDD) are disordered. Residues 227 to 247 (VVAFASLFFILVSITTFCLET) form a helical membrane-spanning segment. Asn256 and Asn265 each carry an N-linked (GlcNAc...) asparagine glycan. A helical transmembrane segment spans residues 278-298 (EPILTYIEGVCVLWFTLEFLV). Over 299–312 (RIVCCPDTLDFVKN) the chain is Cytoplasmic. Residues 313-333 (LLNIIDFVAILPFYLEVGLSG) form a helical membrane-spanning segment. A helical; Voltage-sensor transmembrane segment spans residues 345–364 (FLRVVRFVRILRIFKLTRHF). Topologically, residues 365 to 380 (VGLRVLGHTLRASTNE) are cytoplasmic. The chain crosses the membrane as a helical span at residues 381–401 (FLLLIIFLALGVLIFATMIYY). 4 residues coordinate K(+): Thr436, Leu437, Gly438, and Tyr439. Residues 436 to 441 (TLGYGD) carry the Selectivity filter motif. The helical transmembrane segment at 452–472 (VGALCALAGVLTIAMPVPVIV) threads the bilayer. Topologically, residues 473–635 (NNFGMYYSLA…PTAGTLFLPH (163 aa)) are cytoplasmic. Positions 490–580 (KKRKKHVPRP…RRALRRSTTR (91 aa)) are disordered. Positions 527–542 (AREEGMIERKRADSKQ) are enriched in basic and acidic residues.

This sequence belongs to the potassium channel family. C (Shaw) (TC 1.A.1.2) subfamily. Kv3.4/KCNC4 sub-subfamily. As to quaternary structure, homotetramer. Heterotetramer of potassium channel proteins. Phosphorylation of serine residues in the inactivation gate inhibits rapid channel closure.

It localises to the membrane. The enzyme catalyses K(+)(in) = K(+)(out). In terms of biological role, voltage-gated potassium channel that opens in response to the voltage difference across the membrane, forming a potassium-selective channel through which potassium ions pass in accordance with their electrochemical gradient. The channel displays rapid activation and inactivation kinetics. This is Voltage-gated potassium channel KCNC4 from Homo sapiens (Human).